A 406-amino-acid chain; its full sequence is Putative Bro-N domain-containing protein 019R (406 aa).

In terms of domain architecture, Bro-N spans 4–138 (LINLKQSREY…QILPSIRKYG (135 aa)). Coiled-coil stretches lie at residues 141 to 177 (QLEM…AVRV) and 343 to 372 (DSIN…DKTN).

Belongs to the IIV-6 201R/289L family.

This chain is Putative Bro-N domain-containing protein 019R, found in Invertebrate iridescent virus 3 (IIV-3).